Reading from the N-terminus, the 130-residue chain is MAITQNYGTGRRKSSTARVFLRKGTGNITVNDRPLDEFFGRETARMIVRQPLELTKNTESFDIMVTASGGGTTGQAGAIRLGIARALVEYDETLKSELRKAGFMTRDAREVERKKVGLHKARRATQFSKR.

This sequence belongs to the universal ribosomal protein uS9 family.

The polypeptide is Small ribosomal subunit protein uS9 (Xanthomonas axonopodis pv. citri (strain 306)).